A 299-amino-acid polypeptide reads, in one-letter code: Ectoine dioxygenase (299 aa).

The disordered stretch occupies residues 1–40; sequence MTTTTTNVTDLYPTRGATEVATPRQDPVVWGSPDAPGPVS. Position 133 (Gln133) interacts with L-ectoine. Residue Lys139 coordinates 2-oxoglutarate. Residues His150, Asp152, and His251 each coordinate Fe cation.

Belongs to the PhyH family. EctD subfamily. As to quaternary structure, homodimer. Fe(2+) is required as a cofactor.

The catalysed reaction is L-ectoine + 2-oxoglutarate + O2 = 5-hydroxyectoine + succinate + CO2. Involved in the biosynthesis of 5-hydroxyectoine, called compatible solute, which helps organisms to survive extreme osmotic stress by acting as a highly soluble organic osmolyte. Catalyzes the 2-oxoglutarate-dependent selective hydroxylation of L-ectoine to yield (4S,5S)-5-hydroxyectoine. The protein is Ectoine dioxygenase of Streptomyces coelicolor (strain ATCC BAA-471 / A3(2) / M145).